A 277-amino-acid chain; its full sequence is Myelin proteolipid protein (277 aa).

The Cytoplasmic segment spans residues 1–10 (MGLLECCARC). S-palmitoyl cysteine attachment occurs at residues cysteine 6, cysteine 7, and cysteine 10. A helical membrane pass occupies residues 11 to 36 (LVGAPFASLVATGLCFFGVALFCGCG). The Extracellular segment spans residues 37-59 (HEALTGTEKLIETYFSKNYQDYE). The helical transmembrane segment at 60-88 (YLINVIHAFQYVIYGTASFFFLYGALLLA) threads the bilayer. The Cytoplasmic segment spans residues 89-151 (EGFYTTGAVR…LGKWLGHPDK (63 aa)). Cysteine 109 carries S-palmitoyl cysteine lipidation. Serine 114 is modified (phosphoserine). Phosphothreonine occurs at positions 116 and 118. Residue cysteine 141 is the site of S-palmitoyl cysteine attachment. A helical transmembrane segment spans residues 152–178 (FVGITYALTVVWLLVFACSAVPVYIYF). Residues 179–238 (NTWTTCQSIAFPSKTSASIGSLCADARMYGVLPWNAFPGKVCGSNLLSICKTAEFQMTFH) are Extracellular-facing. Disulfide bonds link cysteine 184-cysteine 228 and cysteine 201-cysteine 220. The O-palmitoyl serine moiety is linked to residue serine 199. The helical transmembrane segment at 239–268 (LFIAAFVGAAATLISLLTFMIAATYNFAVL) threads the bilayer. Residues 269–277 (KLMGRGTKF) are Cytoplasmic-facing.

The protein belongs to the myelin proteolipid protein family.

It localises to the cell membrane. The protein localises to the myelin membrane. In terms of biological role, this is the major myelin protein from the central nervous system. It plays an important role in the formation or maintenance of the multilamellar structure of myelin. In Macaca fascicularis (Crab-eating macaque), this protein is Myelin proteolipid protein (PLP1).